The sequence spans 292 residues: 4-hydroxy-tetrahydrodipicolinate synthase (292 aa).

Pyruvate is bound at residue Thr45. The Proton donor/acceptor role is filled by Tyr133. Lys161 (schiff-base intermediate with substrate) is an active-site residue. Ile203 is a binding site for pyruvate.

The protein belongs to the DapA family. Homodimer.

The protein resides in the cytoplasm. It carries out the reaction L-aspartate 4-semialdehyde + pyruvate = (2S,4S)-4-hydroxy-2,3,4,5-tetrahydrodipicolinate + H2O + H(+). It participates in amino-acid biosynthesis; L-lysine biosynthesis via DAP pathway; (S)-tetrahydrodipicolinate from L-aspartate: step 3/4. Functionally, catalyzes the condensation of (S)-aspartate-beta-semialdehyde [(S)-ASA] and pyruvate to 4-hydroxy-tetrahydrodipicolinate (HTPA). This is 4-hydroxy-tetrahydrodipicolinate synthase from Pseudomonas syringae pv. syringae (strain B728a).